The sequence spans 420 residues: MVGYILDDDLQEVDAEVFNCISGELNRQNSGLQLIASENFVSKAVLQAQGSIFTNKYAEGYPGKRYYCGCHFADIVENLAIERLCRLFGCKFANVQPHSGSQANQGVFAALLKPGDTVIGMSLDCGGHLTHGSAPSISGKWFNAVQYQVDRDTGLIDMDEIEKLAVEHNPSLIIAGSSSYPRVIDFKRFREIADKVGAYLLADIAHYAGLIAAGEFPSPVEYAHVITSTTHKTLRGPRGAVIMTNYEDIHKKIQSSIFPGMQGGPLMHVIAAKAVAFAEALKPEFKDYAKQIIKNSKALGEVFKERGLDLVTGGTDSHMVVLDLRSKSVTGKDAVLALEKLGIICNKNAIPFDPEKPFVTSGLRFGSAAETSRGLQESEFREIGSMVCDVIDSLKASDSVRLSVERDIIKRVKELTSNFI.

Residues Leu-123 and 127 to 129 contribute to the (6S)-5,6,7,8-tetrahydrofolate site; that span reads GHL. At Lys-232 the chain carries N6-(pyridoxal phosphate)lysine.

This sequence belongs to the SHMT family. Homodimer. It depends on pyridoxal 5'-phosphate as a cofactor.

It localises to the cytoplasm. It carries out the reaction (6R)-5,10-methylene-5,6,7,8-tetrahydrofolate + glycine + H2O = (6S)-5,6,7,8-tetrahydrofolate + L-serine. It participates in one-carbon metabolism; tetrahydrofolate interconversion. Its pathway is amino-acid biosynthesis; glycine biosynthesis; glycine from L-serine: step 1/1. In terms of biological role, catalyzes the reversible interconversion of serine and glycine with tetrahydrofolate (THF) serving as the one-carbon carrier. This reaction serves as the major source of one-carbon groups required for the biosynthesis of purines, thymidylate, methionine, and other important biomolecules. Also exhibits THF-independent aldolase activity toward beta-hydroxyamino acids, producing glycine and aldehydes, via a retro-aldol mechanism. The sequence is that of Serine hydroxymethyltransferase from Ehrlichia chaffeensis (strain ATCC CRL-10679 / Arkansas).